Consider the following 229-residue polypeptide: Protein GrpE (229 aa).

The tract at residues 1–89 is disordered; sequence MSDFNKDDYL…AEGSSLTPLG (89 aa). Positions 24–36 are enriched in low complexity; it reads ASPDADGADAPSD. Over residues 39–50 the composition is skewed to basic and acidic residues; that stretch reads EQLKDDMLKDAA. Low complexity predominate over residues 65 to 84; it reads KAAAEATADAASDGDAEGSS.

It belongs to the GrpE family. As to quaternary structure, homodimer.

The protein localises to the cytoplasm. Functionally, participates actively in the response to hyperosmotic and heat shock by preventing the aggregation of stress-denatured proteins, in association with DnaK and GrpE. It is the nucleotide exchange factor for DnaK and may function as a thermosensor. Unfolded proteins bind initially to DnaJ; upon interaction with the DnaJ-bound protein, DnaK hydrolyzes its bound ATP, resulting in the formation of a stable complex. GrpE releases ADP from DnaK; ATP binding to DnaK triggers the release of the substrate protein, thus completing the reaction cycle. Several rounds of ATP-dependent interactions between DnaJ, DnaK and GrpE are required for fully efficient folding. The protein is Protein GrpE of Bifidobacterium animalis subsp. lactis (strain AD011).